The following is a 279-amino-acid chain: Type III pantothenate kinase (279 aa).

Position 6–13 (6–13) interacts with ATP; that stretch reads DIGNTLSK. Substrate contacts are provided by residues tyrosine 92 and 99–102; that span reads GVDR. Aspartate 101 acts as the Proton acceptor in catalysis. Aspartate 120 lines the K(+) pocket. Position 123 (serine 123) interacts with ATP. Threonine 177 provides a ligand contact to substrate.

The protein belongs to the type III pantothenate kinase family. Homodimer. The cofactor is NH4(+). K(+) serves as cofactor.

The protein resides in the cytoplasm. The enzyme catalyses (R)-pantothenate + ATP = (R)-4'-phosphopantothenate + ADP + H(+). It participates in cofactor biosynthesis; coenzyme A biosynthesis; CoA from (R)-pantothenate: step 1/5. Catalyzes the phosphorylation of pantothenate (Pan), the first step in CoA biosynthesis. The sequence is that of Type III pantothenate kinase from Chromohalobacter salexigens (strain ATCC BAA-138 / DSM 3043 / CIP 106854 / NCIMB 13768 / 1H11).